A 98-amino-acid chain; its full sequence is MPSIYVNIFLAFIFALLGMLIYRSHLMSSLLCLEGMMLSLFILITLTALNMHFTLSFMFPIVLLVFAACEAAIGLALLVMVSNTYGMDYVQNLNLLQC.

The next 3 membrane-spanning stretches (helical) occupy residues 1-21 (MPSI…GMLI), 29-49 (SLLC…LTAL), and 61-81 (IVLL…LVMV).

This sequence belongs to the complex I subunit 4L family. Core subunit of respiratory chain NADH dehydrogenase (Complex I) which is composed of 45 different subunits.

It localises to the mitochondrion inner membrane. The enzyme catalyses a ubiquinone + NADH + 5 H(+)(in) = a ubiquinol + NAD(+) + 4 H(+)(out). Core subunit of the mitochondrial membrane respiratory chain NADH dehydrogenase (Complex I) which catalyzes electron transfer from NADH through the respiratory chain, using ubiquinone as an electron acceptor. Part of the enzyme membrane arm which is embedded in the lipid bilayer and involved in proton translocation. This is NADH-ubiquinone oxidoreductase chain 4L (MT-ND4L) from Lepus europaeus (European hare).